A 208-amino-acid chain; its full sequence is EF-hand protein 5 variant 2 (208 aa).

Residues M1–A35 are disordered. 4 consecutive EF-hand domains span residues M64–E98, E99–D134, T135–R170, and S171–N206. Residues E118, D123, D148, T152, and Y154 each coordinate Ca(2+).

The sequence is that of EF-hand protein 5 variant 2 from Trypanosoma cruzi.